Consider the following 464-residue polypeptide: Soluble pyridine nucleotide transhydrogenase (464 aa).

Residue aspartate 35–cysteine 44 participates in FAD binding.

This sequence belongs to the class-I pyridine nucleotide-disulfide oxidoreductase family. It depends on FAD as a cofactor.

It localises to the cytoplasm. It carries out the reaction NAD(+) + NADPH = NADH + NADP(+). Functionally, conversion of NADPH, generated by peripheral catabolic pathways, to NADH, which can enter the respiratory chain for energy generation. This is Soluble pyridine nucleotide transhydrogenase from Stutzerimonas stutzeri (strain A1501) (Pseudomonas stutzeri).